The following is a 1020-amino-acid chain: UPF0182 protein jk1603 (1020 aa).

Over residues 1–18 (MSTPTPPSSGRPKQPFPS) the composition is skewed to pro residues. A disordered region spans residues 1 to 23 (MSTPTPPSSGRPKQPFPSSPGSS). The next 7 membrane-spanning stretches (helical) occupy residues 28 to 48 (ILGI…VVVS), 73 to 93 (LVLF…AAFL), 125 to 145 (FLVG…QSNW), 175 to 195 (LPFL…AFVI), 227 to 247 (LAVI…FDRY), 272 to 292 (QIVL…TIVL), and 300 to 320 (LAVA…PAML). Residues 924–998 (QEIDGSVVDP…KVNKTRESGT (75 aa)) are disordered. 2 stretches are compositionally biased toward basic and acidic residues: residues 942 to 961 (KGDK…EQSS) and 969 to 998 (KSDD…ESGT).

This sequence belongs to the UPF0182 family.

The protein resides in the cell membrane. The sequence is that of UPF0182 protein jk1603 from Corynebacterium jeikeium (strain K411).